Reading from the N-terminus, the 494-residue chain is Cytochrome P450 2A13 (494 aa).

Asn297 lines the substrate pocket. Cys439 contacts heme.

Belongs to the cytochrome P450 family. Heme is required as a cofactor. Expressed in liver and a number of extrahepatic tissues, including nasal mucosa, lung, trachea, brain, mammary gland, prostate, testis, and uterus, but not in heart, kidney, bone marrow, colon, small intestine, spleen, stomach, thymus, or skeletal muscle.

The protein resides in the endoplasmic reticulum membrane. The protein localises to the microsome membrane. It catalyses the reaction an organic molecule + reduced [NADPH--hemoprotein reductase] + O2 = an alcohol + oxidized [NADPH--hemoprotein reductase] + H2O + H(+). Exhibits a coumarin 7-hydroxylase activity. Active in the metabolic activation of hexamethylphosphoramide, N,N-dimethylaniline, 2'-methoxyacetophenone, N-nitrosomethylphenylamine, and the tobacco-specific carcinogen, 4-(methylnitrosamino)-1-(3-pyridyl)-1-butanone. Possesses phenacetin O-deethylation activity. This is Cytochrome P450 2A13 (CYP2A13) from Homo sapiens (Human).